We begin with the raw amino-acid sequence, 200 residues long: Large ribosomal subunit protein bL9 (200 aa).

This sequence belongs to the bacterial ribosomal protein bL9 family.

Functionally, binds to the 23S rRNA. The protein is Large ribosomal subunit protein bL9 of Ruegeria pomeroyi (strain ATCC 700808 / DSM 15171 / DSS-3) (Silicibacter pomeroyi).